The sequence spans 309 residues: uncharacterized protein (309 aa).

The protein belongs to the OprB family.

This is an uncharacterized protein from Aquifex aeolicus (strain VF5).